Reading from the N-terminus, the 179-residue chain is Large ribosomal subunit protein uL5 (179 aa).

Belongs to the universal ribosomal protein uL5 family. As to quaternary structure, part of the 50S ribosomal subunit; part of the 5S rRNA/L5/L18/L25 subcomplex. Contacts the 5S rRNA and the P site tRNA. Forms a bridge to the 30S subunit in the 70S ribosome.

This is one of the proteins that bind and probably mediate the attachment of the 5S RNA into the large ribosomal subunit, where it forms part of the central protuberance. In the 70S ribosome it contacts protein S13 of the 30S subunit (bridge B1b), connecting the 2 subunits; this bridge is implicated in subunit movement. Contacts the P site tRNA; the 5S rRNA and some of its associated proteins might help stabilize positioning of ribosome-bound tRNAs. The sequence is that of Large ribosomal subunit protein uL5 from Vibrio cholerae serotype O1 (strain ATCC 39541 / Classical Ogawa 395 / O395).